A 1025-amino-acid polypeptide reads, in one-letter code: Multidrug resistance protein MdtC (1025 aa).

A run of 12 helical transmembrane segments spans residues 3–23 (FFAL…AITL), 333–353 (EVEQ…FLFL), 360–380 (IIPA…MYLC), 387–407 (LSLM…IVVL), 431–451 (VGFT…PLLL), 463–483 (FAVT…TLTP), 528–548 (LVGV…ISIP), 853–873 (VILI…LYES), 875–895 (VHPL…LLAL), 897–917 (LFNA…IGIV), 953–973 (PIMM…LSGG), and 984–1004 (ITIV…TPVV).

The protein belongs to the resistance-nodulation-cell division (RND) (TC 2.A.6) family. MdtC subfamily. Part of a tripartite efflux system composed of MdtA, MdtB and MdtC. MdtC forms a heteromultimer with MdtB.

It localises to the cell inner membrane. The MdtABC tripartite complex confers resistance against novobiocin and deoxycholate. In Escherichia coli (strain UTI89 / UPEC), this protein is Multidrug resistance protein MdtC.